We begin with the raw amino-acid sequence, 307 residues long: Ornithine carbamoyltransferase (307 aa).

Carbamoyl phosphate-binding positions include 53-56 (STRT), Gln80, Arg104, and 131-134 (HPCQ). Residues Asn162, Asp219, and 223–224 (SM) each bind L-ornithine. Carbamoyl phosphate is bound by residues 259-260 (CL) and Arg287.

The protein belongs to the aspartate/ornithine carbamoyltransferase superfamily. OTCase family.

The protein resides in the cytoplasm. It catalyses the reaction carbamoyl phosphate + L-ornithine = L-citrulline + phosphate + H(+). It participates in amino-acid biosynthesis; L-arginine biosynthesis; L-arginine from L-ornithine and carbamoyl phosphate: step 1/3. Reversibly catalyzes the transfer of the carbamoyl group from carbamoyl phosphate (CP) to the N(epsilon) atom of ornithine (ORN) to produce L-citrulline. This is Ornithine carbamoyltransferase from Psychrobacter arcticus (strain DSM 17307 / VKM B-2377 / 273-4).